We begin with the raw amino-acid sequence, 461 residues long: Deoxyguanosinetriphosphate triphosphohydrolase-like protein (461 aa).

The segment at 22–41 (ERFLPDPPREKDNRPPFRRD) is disordered. Over residues 24–41 (FLPDPPREKDNRPPFRRD) the composition is skewed to basic and acidic residues. Residues 72–285 (RLTHSLEVAQ…MELADDIAYG (214 aa)) enclose the HD domain.

It belongs to the dGTPase family. Type 2 subfamily.

This chain is Deoxyguanosinetriphosphate triphosphohydrolase-like protein, found in Haemophilus influenzae (strain PittEE).